Reading from the N-terminus, the 136-residue chain is Protein NrdI (136 aa).

Belongs to the NrdI family.

Its function is as follows. Probably involved in ribonucleotide reductase function. The chain is Protein NrdI from Escherichia coli O7:K1 (strain IAI39 / ExPEC).